Reading from the N-terminus, the 62-residue chain is Chromatin protein Cren7 2 (62 aa).

The protein belongs to the Cren7 family. Monomer. Methylated at multiple sites, to varying extents.

It localises to the chromosome. The protein localises to the cytoplasm. A chromatin protein, binds double-stranded DNA without sequence specificity. Constrains negative DNA supercoils. This chain is Chromatin protein Cren7 2 (cren7-2), found in Hyperthermus butylicus (strain DSM 5456 / JCM 9403 / PLM1-5).